Consider the following 169-residue polypeptide: Der GTPase-activating protein YihI (169 aa).

Disordered stretches follow at residues 1–92 and 146–169; these read MKPS…EKPM and SYDD…LRGN. Residues 10-19 show a composition bias toward basic residues; the sequence is SKGHAKARRK. Positions 20–30 are enriched in basic and acidic residues; it reads TREELDQEARD. A compositionally biased stretch (basic residues) spans 31–40; that stretch reads RKRQKKRRGH. A compositionally biased stretch (polar residues) spans 49–58; it reads GNTTSGSKGQ. The segment covering 147 to 159 has biased composition (acidic residues); it reads YDDDEEEEEDEKQ. Basic and acidic residues predominate over residues 160 to 169; that stretch reads EDMMRLLRGN.

It belongs to the YihI family. As to quaternary structure, interacts with Der.

Functionally, a GTPase-activating protein (GAP) that modifies Der/EngA GTPase function. May play a role in ribosome biogenesis. This chain is Der GTPase-activating protein YihI, found in Escherichia coli O1:K1 / APEC.